Reading from the N-terminus, the 460-residue chain is Hydroxymethylglutaryl-CoA synthase erg13B (460 aa).

The active-site Proton donor/acceptor is E86. The Acyl-thioester intermediate role is filled by C120. Residues C120, T162, S212, H263, K272, N340, and S374 each contribute to the (3S)-3-hydroxy-3-methylglutaryl-CoA site. H263 (proton donor/acceptor) is an active-site residue.

The protein belongs to the thiolase-like superfamily. HMG-CoA synthase family.

The enzyme catalyses acetoacetyl-CoA + acetyl-CoA + H2O = (3S)-3-hydroxy-3-methylglutaryl-CoA + CoA + H(+). Its pathway is metabolic intermediate biosynthesis; (R)-mevalonate biosynthesis; (R)-mevalonate from acetyl-CoA: step 2/3. Hydroxymethylglutaryl-CoA synthase; part of the first module of ergosterol biosynthesis pathway that includes the early steps of the pathway, conserved across all eukaryotes, and which results in the formation of mevalonate from acetyl-coenzyme A (acetyl-CoA). Erg13A and erg13B condense acetyl-CoA with acetoacetyl-CoA to form hydroxymethylglutaryl-CoA (HMG-CoA). The first module starts with the action of the cytosolic acetyl-CoA acetyltransferase erg10B that catalyzes the formation of acetoacetyl-CoA. The hydroxymethylglutaryl-CoA synthases erg13A and erg13B then condense acetyl-CoA with acetoacetyl-CoA to form HMG-CoA. The rate-limiting step of the early module is the reduction to mevalonate by the 3-hydroxy-3-methylglutaryl-coenzyme A (HMG-CoA) reductases hmg1 and hmg2. Mevalonate is also a precursor for the extracellular siderophore triacetylfusarinine C (TAFC). In Aspergillus fumigatus (strain ATCC MYA-4609 / CBS 101355 / FGSC A1100 / Af293) (Neosartorya fumigata), this protein is Hydroxymethylglutaryl-CoA synthase erg13B.